Here is a 287-residue protein sequence, read N- to C-terminus: D-alanine--D-alanine ligase (287 aa).

The 186-residue stretch at 98-283 folds into the ATP-grasp domain; it reads KTKQIAQSVG…FDDVVRITVE (186 aa). An ATP-binding site is contributed by 124 to 169; it reads PVIIKPVDEGSSKGLFLCNNKEEAEEAVKKLAKPIIEDYIIGEELT. 3 residues coordinate Mg(2+): Asp-238, Glu-250, and Asn-252.

The protein belongs to the D-alanine--D-alanine ligase family. Requires Mg(2+) as cofactor. Mn(2+) is required as a cofactor.

The protein localises to the cytoplasm. The catalysed reaction is 2 D-alanine + ATP = D-alanyl-D-alanine + ADP + phosphate + H(+). The protein operates within cell wall biogenesis; peptidoglycan biosynthesis. In terms of biological role, cell wall formation. This Fusobacterium nucleatum subsp. nucleatum (strain ATCC 25586 / DSM 15643 / BCRC 10681 / CIP 101130 / JCM 8532 / KCTC 2640 / LMG 13131 / VPI 4355) protein is D-alanine--D-alanine ligase.